Consider the following 30-residue polypeptide: Superoxide dismutase [Cu-Zn] 1 (30 aa).

Belongs to the Cu-Zn superoxide dismutase family. Requires Cu cation as cofactor. It depends on Zn(2+) as a cofactor. As to expression, expressed in fruits, leaves and pollen grains.

The protein resides in the cytoplasm. It is found in the endoplasmic reticulum. The enzyme catalyses 2 superoxide + 2 H(+) = H2O2 + O2. With respect to regulation, inhibited by KCN and H(2)O(2). Its function is as follows. Destroys radicals which are normally produced within the cells and which are toxic to biological systems. Probably involved in the protection against oxidative stress during pollen development. This is Superoxide dismutase [Cu-Zn] 1 from Olea europaea (Common olive).